Consider the following 2528-residue polypeptide: Squalestatin tetraketide synthase clz2 (2528 aa).

The Ketosynthase family 3 (KS3) domain maps to 14–409; the sequence is TVPIAIVGMS…GANAHVILES (396 aa). Active-site for beta-ketoacyl synthase activity residues include Cys187, His291, and His331. The tract at residues 420–457 is disordered; that stretch reads VNGHHQKNGTTNGHKGANGTTNELNGTNGTANGHDITT. Low complexity predominate over residues 436–452; the sequence is ANGTTNELNGTNGTANG. The tract at residues 538–856 is malonyl-CoA:ACP transacylase (MAT) domain; it reads GAQWFAMGRE…PYLSCLLRGQ (319 aa). Residues 925 to 1063 form an N-terminal hotdog fold region; the sequence is HDLLGSLIPG…GRIAIELDTS (139 aa). Positions 925–1239 constitute a PKS/mFAS DH domain; sequence HDLLGSLIPG…NQSVGQIALQ (315 aa). Positions 925–1239 are dehydratase (DH) domain; sequence HDLLGSLIPG…NQSVGQIALQ (315 aa). Residue His957 is the Proton acceptor; for dehydratase activity of the active site. The segment at 1083–1239 is C-terminal hotdog fold; that stretch reads TRSVDPSNLY…NQSVGQIALQ (157 aa). The active-site Proton donor; for dehydratase activity is the Asp1148. Positions 1390–1590 are methyltransferase (CMet) domain; it reads LYRYYTDAIK…GLDVELRDCD (201 aa). Residues 1817–2130 are enoyl reductase (ER) (ER) domain; it reads GLIDTLQFSK…AGKHMGKIVI (314 aa). Residues 2153–2331 are ketoreductase (KR) domain; that stretch reads ASYLIVGGLG…AVSIDLGMVQ (179 aa). A disordered region spans residues 2408–2430; sequence RARDAKEQSNSQGGGTDSKISPG. Residues 2441–2518 enclose the Carrier domain; the sequence is EAIDVVGRAI…ALATTVATKS (78 aa). Ser2478 carries the O-(pantetheine 4'-phosphoryl)serine modification.

Its pathway is secondary metabolite biosynthesis. Highly reducing polyketide synthase (HR-PKS); part of the gene cluster that mediates the biosynthesis of squalestatin S1 (SQS1, also known as zaragozic acid A), a heavily oxidized fungal polyketide that offers potent cholesterol lowering activity by targeting squalene synthase (SS). SQS1 is composed of a 2,8-dioxobicyclic[3.2.1]octane-3,4,5-tricarboxyclic acid core that is connected to two lipophilic polyketide arms. These initial steps feature the priming of an unusual benzoic acid starter unit onto the highly reducing polyketide synthase clz14, followed by oxaloacetate extension and product release to generate a tricarboxylic acid containing product. The phenylalanine ammonia lyase (PAL) clz10 and the acyl-CoA ligase clz12 are involved in transforming phenylalanine into benzoyl-CoA. The citrate synthase-like protein clz17 is involved in connecting the C-alpha-carbons of the hexaketide chain and oxaloacetate to afford the tricarboxylic acid unit. The potential hydrolytic enzymes, clz11 and clz13, are in close proximity to pks2 and may participate in product release. On the other side, the tetraketide arm is synthesized by a the squalestatin tetraketide synthase clz2 and enzymatically esterified to the core in the last biosynthetic step, by the acetyltransferase clz6. The biosynthesis of the tetraketide must involve 3 rounds of chain extension. After the first and second rounds methyl-transfer occurs, and in all rounds of extension the ketoreductase and dehydratase are active. The enoyl reductase and C-MeT of clz2 are not active in the final round of extension. The acetyltransferase clz6 appears to have a broad substrate selectivity for its acyl CoA substrate, allowing the in vitro synthesis of novel squalestatins. The biosynthesis of SQS1 requires several oxidative steps likely performed by oxidoreductases clz3, clz15 and clz16. Finally, in support of the identification of the cluster as being responsible for SQS1 production, the cluster contains a gene encoding a putative squalene synthase (SS) clz20, suggesting a likely mechanism for self-resistance. The protein is Squalestatin tetraketide synthase clz2 of Cochliobolus lunatus (Filamentous fungus).